The following is a 136-amino-acid chain: Probable S-adenosyl-L-methionine-binding protein PH1056 (136 aa).

Positions I8 to E126 constitute a TsaA-like domain. S-adenosyl-L-methionine is bound by residues H48–K49, R78, and E106–T109.

This sequence belongs to the tRNA methyltransferase O family.

In Pyrococcus horikoshii (strain ATCC 700860 / DSM 12428 / JCM 9974 / NBRC 100139 / OT-3), this protein is Probable S-adenosyl-L-methionine-binding protein PH1056.